The following is a 167-amino-acid chain: Secretion monitor (167 aa).

The signal sequence occupies residues 1–36 (MIGILNRWRQFGRRYFWPHLLLGMVAASFGLPQASA).

It belongs to the SecM family.

Its subcellular location is the cytoplasm. The protein localises to the cytosol. The protein resides in the periplasm. Its function is as follows. Regulates secA expression by translational coupling of the secM secA operon. Translational pausing at a specific Pro residue 5 residues before the end of the protein may allow disruption of a mRNA repressor helix that normally suppresses secA translation initiation. The chain is Secretion monitor from Erwinia tasmaniensis (strain DSM 17950 / CFBP 7177 / CIP 109463 / NCPPB 4357 / Et1/99).